The following is a 228-amino-acid chain: MKDVKALKLMTLNDVLSQINGDMTLGIGTGSTMELLLPQMAQLIKERGYNITGVCTSNKIAFLAKELGIKICEINDVDHIDLAIDGADEVDPSLNIIKGGGGALFREKVIDEMASRFVVVVDETKMVQYLGETFKLPVEVDKFNWYHILRKIESYADIKVERRVNEDVAFITDNGNYILDCKLPKGIDPYKFHEYLIHLTGVFETGYFLDMADQVIVGTQEGVKILEK.

Substrate-binding positions include 29–32 (TGST), 85–88 (DGAD), and 98–101 (KGGG). The Proton acceptor role is filled by Glu-107. Lys-125 lines the substrate pocket.

The protein belongs to the ribose 5-phosphate isomerase family. In terms of assembly, homodimer.

It catalyses the reaction aldehydo-D-ribose 5-phosphate = D-ribulose 5-phosphate. The protein operates within carbohydrate degradation; pentose phosphate pathway; D-ribose 5-phosphate from D-ribulose 5-phosphate (non-oxidative stage): step 1/1. Functionally, catalyzes the reversible conversion of ribose-5-phosphate to ribulose 5-phosphate. This is Ribose-5-phosphate isomerase A from Staphylococcus aureus (strain MRSA252).